A 29-amino-acid polypeptide reads, in one-letter code: KDGYLVGTDGCKYGCFTRPGHFCANEECL.

Residues 1–29 (KDGYLVGTDGCKYGCFTRPGHFCANEECL) form the LCN-type CS-alpha/beta domain.

It belongs to the long (4 C-C) scorpion toxin superfamily. Sodium channel inhibitor family. Beta subfamily. As to expression, expressed by the venom gland.

It localises to the secreted. Functionally, binds voltage-independently to sodium channels (Nav) and shifts the voltage of activation toward more negative potentials. This toxin is active against mammals and also affects neuromuscular preparations of frog. The chain is Toxin TdII-3 from Tityus discrepans (Venezuelan scorpion).